The following is a 243-amino-acid chain: Small ribosomal subunit protein uS3 (243 aa).

Residues 39 to 107 form the KH type-2 domain; that stretch reads MRKFVMSELK…ETHLNIVEVR (69 aa). A disordered region spans residues 214–243; the sequence is ASERRAMEGDAQGPASRDRDRDRDRRRDNA. Residues 229-243 show a composition bias toward basic and acidic residues; that stretch reads SRDRDRDRDRRRDNA.

Belongs to the universal ribosomal protein uS3 family. In terms of assembly, part of the 30S ribosomal subunit. Forms a tight complex with proteins S10 and S14.

In terms of biological role, binds the lower part of the 30S subunit head. Binds mRNA in the 70S ribosome, positioning it for translation. The chain is Small ribosomal subunit protein uS3 from Rhizobium johnstonii (strain DSM 114642 / LMG 32736 / 3841) (Rhizobium leguminosarum bv. viciae).